The following is a 43-amino-acid chain: Photosystem I reaction center subunit IX (43 aa).

Residues 7–27 (YLSTAPVLSTIWFGSLAGLLI) form a helical membrane-spanning segment.

Belongs to the PsaJ family.

The protein localises to the plastid. Its subcellular location is the chloroplast thylakoid membrane. May help in the organization of the PsaE and PsaF subunits. This is Photosystem I reaction center subunit IX from Vitis vinifera (Grape).